The chain runs to 569 residues: Protein GPR108 (569 aa).

Residues 1–34 (MAVSERRGLSGESPTQCRWGYLSLLVLTLSGCSG) form the signal peptide. N-linked (GlcNAc...) asparagine glycosylation is found at Asn-59, Asn-111, and Asn-182. The tract at residues 144–219 (LLPEAPTQSG…DPSGKEKDQV (76 aa)) is disordered. Over residues 180–192 (KENQTAPQVSGDK) the composition is skewed to polar residues. Positions 194–203 (TPGEHRHSSE) are enriched in basic and acidic residues. N-linked (GlcNAc...) asparagine glycans are attached at residues Asn-226 and Asn-230. 7 helical membrane-spanning segments follow: residues 289-309 (LYLI…SVLC), 318-338 (IHWL…FHSI), 362-382 (LLKG…WAFV), 393-413 (IFGI…VIES), 427-447 (ILFL…VWSI), 475-495 (VMVI…QVAV), and 499-519 (WQWL…VLTG).

Belongs to the LU7TM family. In terms of tissue distribution, high expression in spleen, lung, stomach, large and small intestine, and thymus.

The protein resides in the golgi apparatus. It is found in the cis-Golgi network membrane. Its subcellular location is the trans-Golgi network membrane. The protein localises to the golgi apparatus membrane. May play a role in intracellular immune modulation by activating NF-kappaB response and attenuating Toll-like-receptor response. Its function is as follows. (Microbial infection) Plays an essential function in adeno-associated virus (AAV) transduction, across multiple serotypes except AAV5. May play a critical role in mediating the endosomal virus escape or in the AAV virions trafficking from endosomes to the nucleus. This chain is Protein GPR108 (Gpr108), found in Mus musculus (Mouse).